The chain runs to 438 residues: Serine--tRNA ligase (438 aa).

L-serine is bound at residue 245–247 (TAE). ATP is bound at residue 276–278 (RSE). Glutamate 299 lines the L-serine pocket. 363-366 (EISS) provides a ligand contact to ATP. Serine 398 lines the L-serine pocket.

Belongs to the class-II aminoacyl-tRNA synthetase family. Type-1 seryl-tRNA synthetase subfamily. As to quaternary structure, homodimer. The tRNA molecule binds across the dimer.

It localises to the cytoplasm. The enzyme catalyses tRNA(Ser) + L-serine + ATP = L-seryl-tRNA(Ser) + AMP + diphosphate + H(+). It catalyses the reaction tRNA(Sec) + L-serine + ATP = L-seryl-tRNA(Sec) + AMP + diphosphate + H(+). It functions in the pathway aminoacyl-tRNA biosynthesis; selenocysteinyl-tRNA(Sec) biosynthesis; L-seryl-tRNA(Sec) from L-serine and tRNA(Sec): step 1/1. Functionally, catalyzes the attachment of serine to tRNA(Ser). Is also able to aminoacylate tRNA(Sec) with serine, to form the misacylated tRNA L-seryl-tRNA(Sec), which will be further converted into selenocysteinyl-tRNA(Sec). In Delftia acidovorans (strain DSM 14801 / SPH-1), this protein is Serine--tRNA ligase.